Reading from the N-terminus, the 1651-residue chain is Alsin (1651 aa).

RCC1 repeat units lie at residues Asp-59–Glu-108, Ser-109–Leu-167, and Arg-169–Gln-218. The disordered stretch occupies residues Glu-425–Met-462. Positions Ala-427–Pro-437 are enriched in polar residues. Over residues Ser-439–Lys-449 the composition is skewed to basic and acidic residues. Polar residues predominate over residues Gln-450–Leu-461. Phosphoserine is present on residues Ser-459, Ser-460, Ser-477, and Ser-486. Thr-504 is subject to Phosphothreonine. RCC1 repeat units follow at residues Arg-519–Ala-570 and Ser-572–Asp-621. The residue at position 527 (Lys-527) is an N6-acetyllysine. Residues Gly-684–Lys-879 enclose the DH domain. A PH domain is found at Gly-895–Ala-1001. MORN repeat units lie at residues Tyr-1043 to Met-1065, Tyr-1066 to Leu-1088, Tyr-1094 to Val-1116, Phe-1117 to Ser-1139, Phe-1145 to Glu-1167, Tyr-1169 to Tyr-1191, Tyr-1192 to Ile-1214, and Tyr-1215 to Tyr-1238. A Phosphoserine modification is found at Ser-1329. In terms of domain architecture, VPS9 spans Lys-1507–Asn-1651.

Forms a heteromeric complex with ALS2CL. Interacts with ALS2CL.

May act as a GTPase regulator. Controls survival and growth of spinal motoneurons. The protein is Alsin (Als2) of Mus musculus (Mouse).